The sequence spans 215 residues: Large ribosomal subunit protein bL25 (215 aa).

Positions D170 to K215 are disordered. 2 stretches are compositionally biased toward acidic residues: residues T183 to E197 and D206 to K215.

This sequence belongs to the bacterial ribosomal protein bL25 family. CTC subfamily. As to quaternary structure, part of the 50S ribosomal subunit; part of the 5S rRNA/L5/L18/L25 subcomplex. Contacts the 5S rRNA. Binds to the 5S rRNA independently of L5 and L18.

This is one of the proteins that binds to the 5S RNA in the ribosome where it forms part of the central protuberance. The protein is Large ribosomal subunit protein bL25 of Oceanobacillus iheyensis (strain DSM 14371 / CIP 107618 / JCM 11309 / KCTC 3954 / HTE831).